Here is a 1161-residue protein sequence, read N- to C-terminus: DNA-directed RNA polymerase subunit beta (1161 aa).

The protein belongs to the RNA polymerase beta chain family. In terms of assembly, the RNAP catalytic core consists of 2 alpha, 1 beta, 1 beta' and 1 omega subunit. When a sigma factor is associated with the core the holoenzyme is formed, which can initiate transcription.

The catalysed reaction is RNA(n) + a ribonucleoside 5'-triphosphate = RNA(n+1) + diphosphate. Its function is as follows. DNA-dependent RNA polymerase catalyzes the transcription of DNA into RNA using the four ribonucleoside triphosphates as substrates. The protein is DNA-directed RNA polymerase subunit beta of Streptomyces avermitilis (strain ATCC 31267 / DSM 46492 / JCM 5070 / NBRC 14893 / NCIMB 12804 / NRRL 8165 / MA-4680).